Reading from the N-terminus, the 285-residue chain is HTH-type transcriptional regulator MurR (285 aa).

Residues 1 to 77 enclose the HTH rpiR-type domain; that stretch reads MLYLTKIRNA…MALIGEYSAS (77 aa). A DNA-binding region (H-T-H motif) is located at residues 37–56; sequence SRKMAKLLGISQSSIVKFAQ. The 141-residue stretch at 128 to 268 folds into the SIS domain; the sequence is IIEAISKAPF…FVGLVQLNDV (141 aa).

In terms of assembly, homotetramer.

It functions in the pathway amino-sugar metabolism; N-acetylmuramate degradation [regulation]. Functionally, represses the expression of the murPQ operon involved in the uptake and degradation of N-acetylmuramic acid (MurNAc). Binds to two adjacent inverted repeats within the operator region. MurNAc 6-phosphate, the substrate of MurQ, is the specific inducer that weakens binding of MurR to the operator. The chain is HTH-type transcriptional regulator MurR from Escherichia coli O17:K52:H18 (strain UMN026 / ExPEC).